The sequence spans 350 residues: MPVLHNRISNDALKAKMLAENEPRTTISFYKYFTIADPQTTRDALYKLFTALNVFGRVYLAHEGINAQISVPESHVDKFRQQLYSFDPALNNLRLNIALDDDGKSFWVLRMKVRERIVADGITDPDFDASNVGNYLQAAQVNAMLDDPDALFIDMRNHYEYEVGHFENAMEIPADTFREQLPKAVEMMQEHKDKKIVMYCTGGIRCEKASAWMKHNGFEKVWHIEGGIIEYARKAREQGLPVRFIGKNFVFDERMGERISEDVIAHCHQCGTPCDSHTNCKNDGCHLLFIQCPVCAEKFNGCCSELCCTESALPPEEQRRLRAGRENGNKIFNKSRGRLNTQQGIPELKI.

The Rhodanese domain occupies 146 to 240 (DDPDALFIDM…YARKAREQGL (95 aa)). The active-site Cysteine persulfide intermediate is C200.

Belongs to the TrhO family.

The enzyme catalyses uridine(34) in tRNA + AH2 + O2 = 5-hydroxyuridine(34) in tRNA + A + H2O. In terms of biological role, catalyzes oxygen-dependent 5-hydroxyuridine (ho5U) modification at position 34 in tRNAs. The protein is tRNA uridine(34) hydroxylase of Escherichia fergusonii (strain ATCC 35469 / DSM 13698 / CCUG 18766 / IAM 14443 / JCM 21226 / LMG 7866 / NBRC 102419 / NCTC 12128 / CDC 0568-73).